A 356-amino-acid chain; its full sequence is Histidinol-phosphate aminotransferase (356 aa).

Residue K214 is modified to N6-(pyridoxal phosphate)lysine.

Belongs to the class-II pyridoxal-phosphate-dependent aminotransferase family. Histidinol-phosphate aminotransferase subfamily. In terms of assembly, homodimer. The cofactor is pyridoxal 5'-phosphate.

The enzyme catalyses L-histidinol phosphate + 2-oxoglutarate = 3-(imidazol-4-yl)-2-oxopropyl phosphate + L-glutamate. Its pathway is amino-acid biosynthesis; L-histidine biosynthesis; L-histidine from 5-phospho-alpha-D-ribose 1-diphosphate: step 7/9. This is Histidinol-phosphate aminotransferase from Escherichia fergusonii (strain ATCC 35469 / DSM 13698 / CCUG 18766 / IAM 14443 / JCM 21226 / LMG 7866 / NBRC 102419 / NCTC 12128 / CDC 0568-73).